Here is a 342-residue protein sequence, read N- to C-terminus: Heat-inducible transcription repressor HrcA (342 aa).

The protein belongs to the HrcA family.

Negative regulator of class I heat shock genes (grpE-dnaK-dnaJ and groELS operons). Prevents heat-shock induction of these operons. This chain is Heat-inducible transcription repressor HrcA, found in Onion yellows phytoplasma (strain OY-M).